The primary structure comprises 60 residues: Small ribosomal subunit protein bS21 (60 aa).

Positions 36-60 are disordered; it reads QFFETPQEKHKRKEATRRRQRSRRR. Positions 44–60 are enriched in basic residues; the sequence is KHKRKEATRRRQRSRRR.

This sequence belongs to the bacterial ribosomal protein bS21 family.

The protein is Small ribosomal subunit protein bS21 (rpsU) of Synechocystis sp. (strain ATCC 27184 / PCC 6803 / Kazusa).